The following is a 2313-amino-acid chain: Histone-lysine N-methyltransferase Set2 (2313 aa).

Disordered stretches follow at residues 1–115 (MEES…ASTS), 179–442 (AVGG…EETF), 550–858 (EPPL…LKAK), 883–1106 (RLDE…KKAL), 1118–1150 (ETES…PFGD), and 1163–1251 (KRDK…SQGR). The a.T hook 1 DNA-binding region spans 17–29 (GRGRGRPPKVALS). Residues 73–82 (IKFDVRDLLN) are compositionally biased toward basic and acidic residues. Over residues 101-115 (STGHSQSGTTAASTS) the composition is skewed to low complexity. The segment at residues 197–209 (PRKRGRPRKSQLA) is a DNA-binding region (a.T hook 2). Positions 221 to 241 (SCSDSDTNSTSTTTSNMSSDS) are enriched in low complexity. The segment covering 252-265 (PKSKLRVSLKRLKL) has biased composition (basic residues). Over residues 266–288 (GGRLESSDSGNSPSSSSPEVEPP) the composition is skewed to low complexity. Positions 330 to 345 (ESPKGEEEQEEGRPVE) are enriched in basic and acidic residues. 3 stretches are compositionally biased toward acidic residues: residues 347 to 356 (EPQDLIDIDM), 365 to 375 (PDPEEDLDEIM), and 388 to 398 (ADDEAEEEEDA). At threonine 404 the chain carries Phosphothreonine. A compositionally biased stretch (low complexity) spans 412–433 (ADSCSSAPRRSRRSAPLSGSSR). The span at 552–563 (PLKDESDPKQTE) shows a compositional bias: basic and acidic residues. The segment covering 659 to 671 (EDYESNQEQVAED) has biased composition (acidic residues). The segment covering 676 to 685 (CNNQKGQKQT) has biased composition (polar residues). Composition is skewed to basic and acidic residues over residues 689-708 (EMKE…EKAM), 719-732 (VDKK…EKKV), 740-749 (VPEKKMDSKK), and 758-782 (KQKE…KSSA). Residues serine 786 and serine 788 each carry the phosphoserine modification. Polar residues-rich tracts occupy residues 800-833 (AQWS…SNQP), 918-928 (KSLSGKTSLRR), and 938-955 (LERN…NTSA). Positions 959-969 (KPSKVKKKINP) are enriched in basic residues. Positions 997-1010 (SSPVSTSSDSSSKR) are enriched in low complexity. A compositionally biased stretch (basic and acidic residues) spans 1016–1039 (TTSDLDGGSKLDQRRYTICEDRQP). Composition is skewed to low complexity over residues 1085-1097 (SRQN…SSAS) and 1118-1127 (ETESSESTSS). Over residues 1163-1183 (KRDKVDEDQRKEGQDEVKREA) the composition is skewed to basic and acidic residues. Low complexity predominate over residues 1199–1213 (TPATTPTPSPTQSNP). The AWS domain occupies 1307–1360 (NAEMQCDCFLTGDEEAQGHLSCGAGCINRMLMIECGPLCSNGARCTNKRFQQHQ). Zn(2+) contacts are provided by cysteine 1312, cysteine 1314, cysteine 1328, cysteine 1332, cysteine 1341, cysteine 1345, and cysteine 1351. One can recognise an SET domain in the interval 1362-1479 (WPCRVFRTEK…PGEEITFDYQ (118 aa)). Residues 1415–1417 (HYY) and 1440–1441 (NH) each bind S-adenosyl-L-methionine. Cysteine 1443 is a Zn(2+) binding site. Residues 1486–1502 (DAQRCYCEAANCRGWIG) form the Post-SET domain. Residue glutamine 1488 coordinates S-adenosyl-L-methionine. Cysteine 1490 is a Zn(2+) binding site. Tyrosine 1491 is a binding site for S-adenosyl-L-methionine. Positions 1492 and 1497 each coordinate Zn(2+). 2 disordered regions span residues 1501 to 1598 (IGGE…KPKV) and 1763 to 1860 (MKEH…RRTL). Acidic residues predominate over residues 1505-1534 (PDSDEGEQLDEESDSDAEMDEEELEAEPEE). Positions 1539 to 1551 (KSAKAKAKSKLKA) are enriched in basic residues. Basic and acidic residues-rich tracts occupy residues 1564–1574 (QTKPKDREYKA), 1763–1774 (MKEHEREADRQQ), and 1784–1806 (EDQR…RDTT). The segment covering 1817-1832 (SGNNTICTITTQQKGS) has biased composition (polar residues). Over residues 1840–1860 (TRNDNRRRSDIGPPSEQRRTL) the composition is skewed to basic and acidic residues. Positions 1963–1996 (DPLPPAWNWQVTSDGDIYYYNLRERISQWEPPSP) constitute a WW domain. Residues serine 2130 and serine 2131 each carry the phosphoserine modification. Residues 2177 to 2218 (LGTVGKRKLPMPPSVTVKKHRQEQRSKKVKSSQSPLTATSAR) form a disordered region. Over residues 2193 to 2206 (VKKHRQEQRSKKVK) the composition is skewed to basic residues. The span at 2207 to 2216 (SSQSPLTATS) shows a compositional bias: polar residues.

The protein belongs to the class V-like SAM-binding methyltransferase superfamily. Histone-lysine methyltransferase family. SET2 subfamily. In terms of assembly, interacts with (phosphorylated) Polr2A.

It localises to the nucleus. It is found in the chromosome. The catalysed reaction is L-lysyl(36)-[histone H3] + 3 S-adenosyl-L-methionine = N(6),N(6),N(6)-trimethyl-L-lysyl(36)-[histone H3] + 3 S-adenosyl-L-homocysteine + 3 H(+). Functionally, histone methyltransferase that specifically trimethylates 'Lys-36' of histone H3 (H3K36me3). Represents the main enzyme generating H3K36me3, a specific tag for epigenetic transcriptional activation. Involved in dosage compensation in males (X chromosome dosage compensation) by mediating formation of H3K36me3, a mark recognized by msl-3 component of the MSL complex. In addition to its role in dosage compensation in males, promotes germline stem cell differentiation in females: catalyzes formation of H3K36me3, promoting recruitment of msl-3 and subsequent recruitment of the ATAC complex, leading to transcription of genes, such as RpS19b. The sequence is that of Histone-lysine N-methyltransferase Set2 from Drosophila melanogaster (Fruit fly).